Reading from the N-terminus, the 596-residue chain is Germinal center kinase 3 (596 aa).

Residues 1 to 54 show a composition bias toward low complexity; sequence MSSSNLAGNTNTTTTSSAASAAAAHSAANASTITSEYSTTQTTTGTFNTDTLSS. The disordered stretch occupies residues 1–80; that stretch reads MSSSNLAGNT…PPPPPQVSSP (80 aa). A phosphothreonine; by autocatalysis mark is found at threonine 13 and threonine 32. Over residues 67–77 the composition is skewed to pro residues; it reads SQPPPPPPPQV. Residues 108-386 enclose the Protein kinase domain; it reads YKLDESIGVG…ASELLKYSFF (279 aa). ATP-binding positions include 114–122 and lysine 137; that span reads IGVGATATV. A Phosphoserine; by autocatalysis modification is found at serine 190. Aspartate 240 serves as the catalytic Proton acceptor. A Phosphothreonine modification is found at threonine 280. A Phosphoserine; by autocatalysis modification is found at serine 405. Position 419 is a phosphoserine (serine 419). The tract at residues 429–496 is disordered; sequence NWEFEYDSPQ…EGGGATTPCP (68 aa). Residues 432-450 are compositionally biased toward acidic residues; it reads FEYDSPQESDDDSDLEDEE. The segment covering 466-479 has biased composition (gly residues); sequence GAAGAAGGATGGAA.

Belongs to the protein kinase superfamily. STE Ser/Thr protein kinase family. STE20 subfamily. In terms of assembly, interacts (via C-terminus) with clh-3; required for the phosphorylation-mediated inhibition of clh-3 function. Interacts (via C-terminus) with wnk-1; the interaction is direct. Phosphorylated at Thr-280 and Ser-419 probably by wnk-1; phosphorylation results in weak activation. Predominantly autophosphorylated at Thr-32 and Ser-190 and weakly autophosphorylated at Thr-13 and Ser-405 in vitro. In terms of tissue distribution, ubiquitously expressed with a higher expression in the excretory cell. Expressed in both male and female germ cells; up-regulated in maturing spermatocytes but absent in mature sperm.

It is found in the cytoplasm. It localises to the nucleus. It carries out the reaction L-seryl-[protein] + ATP = O-phospho-L-seryl-[protein] + ADP + H(+). The catalysed reaction is L-threonyl-[protein] + ATP = O-phospho-L-threonyl-[protein] + ADP + H(+). Its function is as follows. Plays a role in osmotic stress responses by regulating ion homeostasis and by controlling cell volume via the phosphorylation-mediated inhibition of the chloride channel clh-3. In addition, increases gpdh-1 translation upon osmotic stress, likely downstream of wnk-1. Involved in several developmental processes including the tubular formation of the excretory canals, the formation of the intestine and the progression through larval stages. In addition, required for germ line development by controlling meiosis and chromosomal segregation during spermatogenesis. By controlling clh-3 activity, may regulate the development of the excretory canals and fertility. This Caenorhabditis elegans protein is Germinal center kinase 3.